The sequence spans 448 residues: Cysteine--tRNA ligase (448 aa).

Cys-29 provides a ligand contact to Zn(2+). The 'HIGH' region signature appears at 31-41 (PTVYDTAHIGN). Residues 79 to 91 (ATTGADRGADQAH) show a composition bias toward basic and acidic residues. The segment at 79–106 (ATTGADRGADQAHRGPLPRRHGPLNAAP) is disordered. Residues Cys-206 and Glu-235 each coordinate Zn(2+). The 'KMSKS' region motif lies at 265–269 (RMSKS). Lys-268 provides a ligand contact to ATP.

This sequence belongs to the class-I aminoacyl-tRNA synthetase family. Monomer. Zn(2+) serves as cofactor.

Its subcellular location is the cytoplasm. It catalyses the reaction tRNA(Cys) + L-cysteine + ATP = L-cysteinyl-tRNA(Cys) + AMP + diphosphate. The chain is Cysteine--tRNA ligase (cysS) from Azospirillum brasilense.